The primary structure comprises 377 residues: Iris (377 aa).

N-linked (GlcNAc...) asparagine glycosylation is found at Asn11 and Asn226.

This sequence belongs to the serpin family. As to expression, female saliva (at protein level). Female salivary gland (at protein level).

It localises to the secreted. Serine protease inhibitor with anticoagulant and immunosuppressive properties that can modulate blood feeding of ticks on vertebrate species. Strongly inhibits human leukocyte elastase (ELANE) and porcine pancreatic elastase. Moderately inhibits human tPA/tissue-type plasminogen activator (PLAT), coagulation factor Xa (F10), thrombin (F2) and trypsin. Does not inhibit human plasmin (PLG). Inhibits platelet aggregation. Inhibits the intrinsic pathway of blood coagulation in the host. Inhibits fibrinolysis in the host. Inhibits proliferation of mouse splenocytes. Decreases the number of IFN-gamma (IFNG)-producing human peripheral blood mononuclear cells (PBMCs) after stimulation with phytohemagglutinin A (PHA). Increases the number of IL10-producing human PBMCs after stimulation with lipopolysaccharides (LPS) with no significant effect on IL10 production. Inhibits production of IFNG, IL6, TNF-alpha (TNF) and CXCL8 by human PBMCs. Binds to monocyte/macrophage subpopulation of the host PBMCs. Increases both survival rate and survival time in mice with LPS-induced endotoxemic shock. This chain is Iris, found in Ixodes ricinus (Common tick).